A 360-amino-acid polypeptide reads, in one-letter code: Phosphoserine aminotransferase (360 aa).

Residue arginine 42 coordinates L-glutamate. Residues alanine 76 to serine 77, tryptophan 102, threonine 152, aspartate 172, and glutamine 195 contribute to the pyridoxal 5'-phosphate site. Lysine 196 carries the post-translational modification N6-(pyridoxal phosphate)lysine. Residue asparagine 237–threonine 238 participates in pyridoxal 5'-phosphate binding.

Belongs to the class-V pyridoxal-phosphate-dependent aminotransferase family. SerC subfamily. In terms of assembly, homodimer. Requires pyridoxal 5'-phosphate as cofactor.

The protein localises to the cytoplasm. It catalyses the reaction O-phospho-L-serine + 2-oxoglutarate = 3-phosphooxypyruvate + L-glutamate. The catalysed reaction is 4-(phosphooxy)-L-threonine + 2-oxoglutarate = (R)-3-hydroxy-2-oxo-4-phosphooxybutanoate + L-glutamate. The protein operates within amino-acid biosynthesis; L-serine biosynthesis; L-serine from 3-phospho-D-glycerate: step 2/3. Functionally, catalyzes the reversible conversion of 3-phosphohydroxypyruvate to phosphoserine and of 3-hydroxy-2-oxo-4-phosphonooxybutanoate to phosphohydroxythreonine. This chain is Phosphoserine aminotransferase, found in Bacillus cereus (strain ATCC 14579 / DSM 31 / CCUG 7414 / JCM 2152 / NBRC 15305 / NCIMB 9373 / NCTC 2599 / NRRL B-3711).